We begin with the raw amino-acid sequence, 237 residues long: Undecaprenyl-diphosphatase (237 aa).

7 helical membrane-spanning segments follow: residues 38–58, 65–85, 92–112, 126–146, 166–186, 191–211, and 217–237; these read QTAV…LDGI, WRII…GVLF, LFSS…ILMF, MSFL…FPGI, ALQY…ILGL, VTIL…YVLS, and GKIW…YLAG.

The protein belongs to the UppP family.

Its subcellular location is the cell inner membrane. The catalysed reaction is di-trans,octa-cis-undecaprenyl diphosphate + H2O = di-trans,octa-cis-undecaprenyl phosphate + phosphate + H(+). Catalyzes the dephosphorylation of undecaprenyl diphosphate (UPP). Confers resistance to bacitracin. The chain is Undecaprenyl-diphosphatase from Thermotoga maritima (strain ATCC 43589 / DSM 3109 / JCM 10099 / NBRC 100826 / MSB8).